A 210-amino-acid polypeptide reads, in one-letter code: Uracil phosphoribosyltransferase (210 aa).

5-phospho-alpha-D-ribose 1-diphosphate is bound by residues R78, R103, and 130–138 (DPMLATGGT). Uracil is bound by residues I193 and 198–200 (GDA). D199 contributes to the 5-phospho-alpha-D-ribose 1-diphosphate binding site.

The protein belongs to the UPRTase family. It depends on Mg(2+) as a cofactor.

The enzyme catalyses UMP + diphosphate = 5-phospho-alpha-D-ribose 1-diphosphate + uracil. The protein operates within pyrimidine metabolism; UMP biosynthesis via salvage pathway; UMP from uracil: step 1/1. With respect to regulation, allosterically activated by GTP. Its function is as follows. Catalyzes the conversion of uracil and 5-phospho-alpha-D-ribose 1-diphosphate (PRPP) to UMP and diphosphate. This chain is Uracil phosphoribosyltransferase, found in Xanthomonas euvesicatoria pv. vesicatoria (strain 85-10) (Xanthomonas campestris pv. vesicatoria).